Reading from the N-terminus, the 101-residue chain is Small ribosomal subunit protein uS14 (101 aa).

It belongs to the universal ribosomal protein uS14 family. As to quaternary structure, part of the 30S ribosomal subunit. Contacts proteins S3 and S10.

Binds 16S rRNA, required for the assembly of 30S particles and may also be responsible for determining the conformation of the 16S rRNA at the A site. This Chlamydia caviae (strain ATCC VR-813 / DSM 19441 / 03DC25 / GPIC) (Chlamydophila caviae) protein is Small ribosomal subunit protein uS14.